The sequence spans 591 residues: DEAD-box ATP-dependent RNA helicase 30 (591 aa).

The disordered stretch occupies residues 1–109 (MSSYDRRFAD…GRGGSSKREL (109 aa)). A compositionally biased stretch (gly residues) spans 72–103 (FSVGRGGGRGGYGQYGDRNGGGNWGGGGGRGG). The Q motif signature appears at 165-193 (KMFQDANFPDNILEAIAKLGFTEPTPIQA). The Helicase ATP-binding domain maps to 196 to 371 (WPMALKGRDL…RQFLRDPYKA (176 aa)). Position 209–216 (209–216 (AETGSGKT)) interacts with ATP. The DEAD box signature appears at 319-322 (DEAD). The Helicase C-terminal domain occupies 399 to 544 (RLLTLLKQLM…VVPPTLSALV (146 aa)). Residues 547-591 (SGSGYGGSGGGRNFRPRGGGRGGGFGDKRSRSTSNFVPHGGKRTW) are disordered. A compositionally biased stretch (gly residues) spans 549–571 (SGYGGSGGGRNFRPRGGGRGGGF).

This sequence belongs to the DEAD box helicase family. DDX5/DBP2 subfamily.

It is found in the nucleus. The catalysed reaction is ATP + H2O = ADP + phosphate + H(+). ATP-dependent RNA helicase involved nonsense-mediated mRNA decay and ribosome biogenesis through rRNA processing. This is DEAD-box ATP-dependent RNA helicase 30 (RH30) from Arabidopsis thaliana (Mouse-ear cress).